The sequence spans 873 residues: DNA mismatch repair protein PMS1 (873 aa).

The interval 1 to 357 (MTQIHQINDI…FKTTLSDYYN (357 aa)) is DNA- and ATP-binding. The span at 379-402 (LKTEVFDDRSTTHESDNENYHTAR) shows a compositional bias: basic and acidic residues. Residues 379-423 (LKTEVFDDRSTTHESDNENYHTARSESNQSNHAHFNSTTGVIDKS) form a disordered region. Phosphoserine is present on Ser-393. A compositionally biased stretch (polar residues) spans 403–423 (SESNQSNHAHFNSTTGVIDKS). The residue at position 566 (Ser-566) is a Phosphoserine. Residues 661-873 (YLTLTVSKND…WSSFSKDYEI (213 aa)) are interaction with MLH1.

The protein belongs to the DNA mismatch repair MutL/HexB family. As to quaternary structure, heterodimer of MLH1 and PMS1, called MutLalpha, which is the major MMR MutL activity correcting base-base mismatches as well as IDLs. The heterodimer binds double strand DNA independently of a mismatch with positive cooperativity and has more than one DNA binding site. Forms a ternary complex with either the MSH2-MSH6 (MutSalpha) or the MSH2-MSH3 heterodimer (MutSbeta), which recognize and bind to mismatch DNA. Ternary complex formation is promoted by ATP binding.

It localises to the nucleus. In terms of biological role, required for DNA mismatch repair (MMR), correcting base-base mismatches and insertion-deletion loops (IDLs) resulting from DNA replication, DNA damage or from recombination events between non-identical sequences during meiosis. Component of the MutLalpha heterodimer that forms a ternary complex with the MutS heterodimers, which initially recognize the DNA mismatches. This complex is thought to be responsible for directing the downstream MMR events, including strand discrimination, excision, and resynthesis. Plays a major role in maintaining the genetic stability of simple sequence repeats and in the repair of heteroduplex sites present in meiotic recombination intermediates. The chain is DNA mismatch repair protein PMS1 (PMS1) from Saccharomyces cerevisiae (strain ATCC 204508 / S288c) (Baker's yeast).